A 326-amino-acid chain; its full sequence is Organic solute transporter subunit alpha (326 aa).

Over methionine 1–aspartate 28 the chain is Extracellular. Asparagine 5 carries N-linked (GlcNAc...) asparagine glycosylation. The helical transmembrane segment at isoleucine 29 to phenylalanine 49 threads the bilayer. The Cytoplasmic segment spans residues isoleucine 50–threonine 67. The helical transmembrane segment at isoleucine 68–valine 88 threads the bilayer. The Extracellular segment spans residues proline 89–serine 99. A helical membrane pass occupies residues alanine 100–glycine 120. Residues aspartate 121–lysine 161 lie on the Cytoplasmic side of the membrane. Residues leucine 162–tryptophan 182 traverse the membrane as a helical segment. Residues threonine 183–alanine 198 are Extracellular-facing. N-linked (GlcNAc...) asparagine glycosylation is found at asparagine 184 and asparagine 191. Residues isoleucine 199–methionine 219 form a helical membrane-spanning segment. At phenylalanine 220 to alanine 237 the chain is on the cytoplasmic side. Residues methionine 238–leucine 258 form a helical membrane-spanning segment. A glycan (N-linked (GlcNAc...) asparagine) is linked at asparagine 259. Residues asparagine 259–tyrosine 275 lie on the Extracellular side of the membrane. The chain crosses the membrane as a helical span at residues methionine 276–leucine 296. At tyrosine 297 to alanine 326 the chain is on the cytoplasmic side.

This sequence belongs to the OST-alpha family. As to quaternary structure, interacts with slc51b. The Ost-alpha/Ost-beta complex is a heterodimer composed of alpha (slc51a) and beta (slc51b) subunit.

It is found in the cell membrane. It localises to the endoplasmic reticulum membrane. The catalysed reaction is taurocholate(out) = taurocholate(in). The enzyme catalyses prostaglandin E2(out) = prostaglandin E2(in). It catalyses the reaction estrone 3-sulfate(out) = estrone 3-sulfate(in). It carries out the reaction dehydroepiandrosterone 3-sulfate(out) = dehydroepiandrosterone 3-sulfate(in). The catalysed reaction is tauroursodeoxycholate(out) = tauroursodeoxycholate(in). The enzyme catalyses glycoursodeoxycholate(out) = glycoursodeoxycholate(in). It catalyses the reaction glycocholate(out) = glycocholate(in). It carries out the reaction taurochenodeoxycholate(out) = taurochenodeoxycholate(in). The catalysed reaction is glycochenodeoxycholate(out) = glycochenodeoxycholate(in). The enzyme catalyses taurodeoxycholate(out) = taurodeoxycholate(in). It catalyses the reaction glycodeoxycholate(out) = glycodeoxycholate(in). Its function is as follows. Essential component of the Ost-alpha/Ost-beta complex, a heterodimer that acts as the intestinal basolateral transporter responsible for the translocation of bile acids (such as taurocholate), steroids (such as estrone sulfate), and eicosanoids (such as prostaglandin E2). The protein is Organic solute transporter subunit alpha (slc51a) of Danio rerio (Zebrafish).